Here is a 555-residue protein sequence, read N- to C-terminus: Potassium-transporting ATPase potassium-binding subunit (555 aa).

10 helical membrane-spanning segments follow: residues 2–22 (IWVA…PTGI), 60–80 (QYAL…YFIF), 130–150 (IGIT…VMAF), 173–193 (VFLP…VPQT), 246–266 (MSNI…PFTY), 278–298 (ILFV…TTSE), 374–394 (AGFV…GLMV), 412–432 (LIAV…ALAL), 483–503 (LVMF…AASL), and 525–545 (GIFI…MLVL).

It belongs to the KdpA family. The system is composed of three essential subunits: KdpA, KdpB and KdpC.

It localises to the cell membrane. Functionally, part of the high-affinity ATP-driven potassium transport (or Kdp) system, which catalyzes the hydrolysis of ATP coupled with the electrogenic transport of potassium into the cytoplasm. This subunit binds the extracellular potassium ions and delivers the ions to the membrane domain of KdpB through an intramembrane tunnel. This chain is Potassium-transporting ATPase potassium-binding subunit, found in Bacillus cereus (strain G9842).